Reading from the N-terminus, the 807-residue chain is uncharacterized protein (807 aa).

Positions 1–18 (MNTVLFVILLAAIGSNHG) are cleaved as a signal peptide. Topologically, residues 19–704 (LIDERLTVNR…GLFTDIFGGE (686 aa)) are extracellular. Positions 133–142 (TTTTAAPQTG) are enriched in polar residues. A disordered region spans residues 133-171 (TTTTAAPQTGNRRRRRAAGDEPNTDDNTPPNLEIPDWLD). N-linked (GlcNAc...) asparagine; by host glycosylation is found at Asn-277 and Asn-660. The chain crosses the membrane as a helical span at residues 705–725 (VWAVIAAIFSPVFLTAFALII). The Cytoplasmic segment spans residues 726–807 (SLINFIPAVR…GERQVISRTN (82 aa)).

It localises to the host membrane. This is an uncharacterized protein from Magallana gigas (Pacific oyster).